We begin with the raw amino-acid sequence, 385 residues long: Homoserine O-succinyltransferase (385 aa).

Positions 45-355 (NAVLVCHALN…PHGHDAFLLD (311 aa)) constitute an AB hydrolase-1 domain. The Nucleophile role is filled by Ser151. A substrate-binding site is contributed by Arg221. Catalysis depends on residues Asp316 and His349. Position 350 (Asp350) interacts with substrate.

Belongs to the AB hydrolase superfamily. MetX family. In terms of assembly, homodimer.

The protein localises to the cytoplasm. The catalysed reaction is L-homoserine + succinyl-CoA = O-succinyl-L-homoserine + CoA. Its pathway is amino-acid biosynthesis; L-methionine biosynthesis via de novo pathway; O-succinyl-L-homoserine from L-homoserine: step 1/1. Its function is as follows. Transfers a succinyl group from succinyl-CoA to L-homoserine, forming succinyl-L-homoserine. This chain is Homoserine O-succinyltransferase, found in Janthinobacterium sp. (strain Marseille) (Minibacterium massiliensis).